A 480-amino-acid chain; its full sequence is ATP synthase subunit beta (480 aa).

152–159 contacts ATP; it reads GGAGVGKT.

Belongs to the ATPase alpha/beta chains family. As to quaternary structure, F-type ATPases have 2 components, CF(1) - the catalytic core - and CF(0) - the membrane proton channel. CF(1) has five subunits: alpha(3), beta(3), gamma(1), delta(1), epsilon(1). CF(0) has three main subunits: a(1), b(2) and c(9-12). The alpha and beta chains form an alternating ring which encloses part of the gamma chain. CF(1) is attached to CF(0) by a central stalk formed by the gamma and epsilon chains, while a peripheral stalk is formed by the delta and b chains.

It is found in the cell membrane. The enzyme catalyses ATP + H2O + 4 H(+)(in) = ADP + phosphate + 5 H(+)(out). In terms of biological role, produces ATP from ADP in the presence of a proton gradient across the membrane. The catalytic sites are hosted primarily by the beta subunits. This chain is ATP synthase subunit beta, found in Wolbachia sp. subsp. Brugia malayi (strain TRS).